A 127-amino-acid chain; its full sequence is Large ribosomal subunit protein bL12 (127 aa).

The segment at 101-127 is disordered; it reads VKTGVSKEEAEDAKKQLVESGAEVEIK. Over residues 105–117 the composition is skewed to basic and acidic residues; that stretch reads VSKEEAEDAKKQL.

Belongs to the bacterial ribosomal protein bL12 family. As to quaternary structure, homodimer. Part of the ribosomal stalk of the 50S ribosomal subunit. Forms a multimeric L10(L12)X complex, where L10 forms an elongated spine to which 2 to 4 L12 dimers bind in a sequential fashion. Binds GTP-bound translation factors.

Its function is as follows. Forms part of the ribosomal stalk which helps the ribosome interact with GTP-bound translation factors. Is thus essential for accurate translation. The sequence is that of Large ribosomal subunit protein bL12 from Geobacter metallireducens (strain ATCC 53774 / DSM 7210 / GS-15).